We begin with the raw amino-acid sequence, 781 residues long: Catenin beta-1 (781 aa).

Ala-2 bears the N-acetylalanine mark. An interaction with VCL region spans residues 2–23 (ATQADLMELDMAMEPDRKAAVS). At Ser-23 the chain carries Phosphoserine; by GSK3-beta; alternate. Ser-23 carries O-linked (GlcNAc) serine; alternate glycosylation. The residue at position 29 (Ser-29) is a Phosphoserine; by GSK3-beta. Phosphoserine; by GSK3-beta and HIPK2 is present on residues Ser-33 and Ser-37. Positions 34–56 (GIHSGATTTAPSLSGKGNPEEED) are disordered. Thr-41 is modified (phosphothreonine; by GSK3-beta). A Phosphoserine modification is found at Ser-45. An N6-acetyllysine modification is found at Lys-49. At Tyr-64 the chain carries Phosphotyrosine; by PTK6. Tyr-142 is subject to Phosphotyrosine; by FYN and PTK6. ARM repeat units follow at residues 151–191 (RAIP…IMRS), 193–234 (QMVS…IFKS), 235–276 (GGIP…VRLA), 277–318 (GGLQ…ILAS), 319–360 (GGPQ…IVEA), 361–389 (GGMQ…RNLS), 400–441 (GLLG…VCQV), 442–484 (GGIE…AQNA), 489–530 (YGLP…LREQ), 531–571 (GAIP…EIVE), 594–636 (NTIP…AEGA), and 637–666 (TAPL…SEDK). An interaction with BCL9 region spans residues 156 to 178 (LTKLLNDEDQVVVNKAAVMVHQL). Ser-191 carries the post-translational modification Phosphoserine; by CDK5. Ser-246 is subject to Phosphoserine; by CDK5. 2 positions are modified to phosphotyrosine: Tyr-331 and Tyr-333. At Ser-552 the chain carries Phosphoserine; by AMPK. Residue Thr-556 is modified to Phosphothreonine. The residue at position 619 (Cys-619) is an S-nitrosocysteine. At Ser-675 the chain carries Phosphoserine. A disordered region spans residues 705–781 (EPLGYRQDDP…NQLAWFDTDL (77 aa)). The segment covering 734–745 (MMEHEMGGHHPG) has biased composition (basic and acidic residues). Residues 772 to 781 (NQLAWFDTDL) form an interaction with SCRIB region.

This sequence belongs to the beta-catenin family. As to quaternary structure, two separate complex-associated pools are found in the cytoplasm. The majority is present as component of an E-cadherin/ catenin adhesion complex composed of at least E-cadherin/CDH1 and beta-catenin/CTNNB1, and possibly alpha-catenin/CTNNA1; the complex is located to adherens junctions. The stable association of CTNNA1 is controversial as CTNNA1 was shown not to bind to F-actin when assembled in the complex. Alternatively, the CTNNA1-containing complex may be linked to F-actin by other proteins such as LIMA1. Another cytoplasmic pool is part of a large complex containing AXIN1, AXIN2, APC, CSNK1A1 and GSK3B that promotes phosphorylation on N-terminal Ser and Thr residues and ubiquitination of CTNNB1 via BTRC and its subsequent degradation by the proteasome. Wnt-dependent activation of DVL antagonizes the action of GSK3B. When GSK3B activity is inhibited the complex dissociates, CTNNB1 is dephosphorylated and is no longer targeted for destruction. The stabilized protein translocates to the nucleus, where it binds TCF/LEF-1 family members, BCL9, BCL9L and possibly also RUVBL1 and CHD8. Binds CTNNBIP and EP300. CTNNB1 forms a ternary complex with LEF1 and EP300 that is disrupted by CTNNBIP1 binding. Interacts with TAX1BP3 (via the PDZ domain); this interaction inhibits the transcriptional activity of CTNNB1. Interacts with AJAP1, BAIAP1, CARM1, CTNNA3, CXADR and PCDH11Y. Binds NHERF1. Interacts with GLIS2 and SLC30A9. Interacts with XIRP1 and MUC1. Interacts with PTPRU (via the cytoplasmic juxtamembrane domain) and with EMD. Interacts with SCRIB. Interacts with TNIK. Interacts with SESTD1 and TRPC4. Interacts directly with AXIN1; the interaction is regulated by CDK2 phosphorylation of AXIN1. Interacts with CAV1. Interacts with TRPV4. The TRPV4 and CTNNB1 complex can interact with CDH1. Interacts with VCL. Interacts with PTPRJ. Interacts with PKT7. Interacts with FAT1 (via the cytoplasmic domain). Interacts with NANOS1 and NDRG2. Interacts with NEK2, CDK2 and CDK5. Interacts with PTK6. Interacts with SOX7; this interaction may lead to proteasomal degradation of active CTNNB1 and thus inhibition of Wnt/beta-catenin-stimulated transcription. Identified in a complex with HINT1 and MITF. Interacts with FHIT. The CTNNB1 and TCF4 complex interacts with PML. Interacts with FERMT2. Identified in a complex with TCF4 and FERMT2. Interacts with RORA. May interact with P-cadherin/CDH3. Interacts with RAPGEF2. Interacts with RNF220. Interacts with CTNND2. Interacts (via the C-terminal region) with CBY1. The complex composed, at least, of APC, CTNNB1 and GSK3B interacts with JPT1; the interaction requires the inactive form of GSK3B (phosphorylated at 'Ser-9'). Interacts with DLG5. Interacts with FAM53B; promoting translocation to the nucleus. Interacts with TMEM170B. Interacts with AHI1. Interacts with GID8. Component of an cadherin:catenin adhesion complex composed of at least of CDH26, beta-catenin/CTNNB1, alpha-catenin/CTNNA1 and p120 catenin/CTNND1. Forms a complex comprising APPL1, RUVBL2, APPL2, HDAC1 and HDAC2. Interacts with IRF2BPL; mediates the ubiquitination and degradation of CTNNB1. Interacts with LMBR1L and AMFR. Interacts with LMBR1L. Interacts with SOX30; prevents interaction of CTNNB1 with TCF7L2/TCF4 and leads to inhibition of Wnt signaling. Interacts with SOX9; inhibiting CTNNB1 activity by competing with the binding sites of TCF/LEF within CTNNB1, thereby inhibiting the Wnt signaling. Interacts with SPN/CD43 cytoplasmic tail. Interacts (when phosphorylated at Tyr-333) with isoform M2 of PKM (PKM2); promoting transcription activation. Interacts with PKP2 (via HEAD domain). Interacts with CDH1. Interacts (when unphosphorylated) with FLYWCH1, perhaps preventing interaction of CTNNB1 with TCF4, and thereby regulating transcription activation; phosphorylation of CTNNB1 may inhibit the interaction. Interacts (via the central armadillo domains) with probable transcriptional regulator ADNP (via N-terminal region); interaction is direct and stabilizes CTNNB1 by modulating its phosphorylation by glycogen synthase kinase-3 beta GSK3B. Interacts with NR5A2. Interacts with DSG2; the interaction promotes localization of CTNNB1 at cell junctions thus reducing its nuclear localization and subsequent transcription of CTNNB1/TCF-target genes. Post-translationally, phosphorylation by GSK3B requires prior phosphorylation of Ser-45 by another kinase. Phosphorylation proceeds then from Thr-41 to Ser-33. Phosphorylated by NEK2. EGF stimulates tyrosine phosphorylation. Phosphorylated on Ser-33 and Ser-37 by HIPK2. This phosphorylation triggers proteasomal degradation. Phosphorylation at Ser-552 by AMPK promotes stabilization of the protein, enhancing TCF/LEF-mediated transcription. Phosphorylation on Ser-191 and Ser-246 by CDK5. Phosphorylation by CDK2 regulates insulin internalization. Phosphorylation by PTK6 at Tyr-64, Tyr-142, Tyr-331 and/or Tyr-333 with the predominant site at Tyr-64 is not essential for inhibition of transcriptional activity. Phosphorylation by SRC at Tyr-333 promotes interaction with isoform M2 of PKM (PKM2); promoting transcription activation. In terms of processing, ubiquitinated by the SCF(BTRC) E3 ligase complex when phosphorylated by GSK3B, leading to its degradation. Ubiquitinated by a E3 ubiquitin ligase complex containing UBE2D1, SIAH1, CACYBP/SIP, SKP1, APC and TBL1X, leading to its subsequent proteasomal degradation. Ubiquitinated and degraded following interaction with SOX9. Ubiquitinated via 'Lys-11'- and 'Lys-29'-linked ubiquitin chains by UBR5, leading to its stabilization. S-nitrosylation at Cys-619 within adherens junctions promotes VEGF-induced, NO-dependent endothelial cell permeability by disrupting interaction with E-cadherin, thus mediating disassembly adherens junctions. Post-translationally, O-glycosylation at Ser-23 decreases nuclear localization and transcriptional activity, and increases localization to the plasma membrane and interaction with E-cadherin CDH1. In terms of processing, deacetylated at Lys-49 by SIRT1.

It localises to the cytoplasm. The protein localises to the nucleus. It is found in the cytoskeleton. The protein resides in the cell junction. Its subcellular location is the adherens junction. It localises to the cell membrane. The protein localises to the microtubule organizing center. It is found in the centrosome. The protein resides in the spindle pole. Its subcellular location is the synapse. It localises to the cilium basal body. In terms of biological role, key downstream component of the canonical Wnt signaling pathway. In the absence of Wnt, forms a complex with AXIN1, AXIN2, APC, CSNK1A1 and GSK3B that promotes phosphorylation on N-terminal Ser and Thr residues and ubiquitination of CTNNB1 via BTRC and its subsequent degradation by the proteasome. In the presence of Wnt ligand, CTNNB1 is not ubiquitinated and accumulates in the nucleus, where it acts as a coactivator for transcription factors of the TCF/LEF family, leading to activate Wnt responsive genes. Also acts as a coactivator for other transcription factors, such as NR5A2. Promotes epithelial to mesenchymal transition/mesenchymal to epithelial transition (EMT/MET) via driving transcription of CTNNB1/TCF-target genes. Involved in the regulation of cell adhesion, as component of an E-cadherin:catenin adhesion complex. Acts as a negative regulator of centrosome cohesion. Involved in the CDK2/PTPN6/CTNNB1/CEACAM1 pathway of insulin internalization. Blocks anoikis of malignant kidney and intestinal epithelial cells and promotes their anchorage-independent growth by down-regulating DAPK2. Disrupts PML function and PML-NB formation by inhibiting RANBP2-mediated sumoylation of PML. Promotes neurogenesis by maintaining sympathetic neuroblasts within the cell cycle. Involved in chondrocyte differentiation via interaction with SOX9: SOX9-binding competes with the binding sites of TCF/LEF within CTNNB1, thereby inhibiting the Wnt signaling. Acts as a positive regulator of odontoblast differentiation during mesenchymal tooth germ formation, via promoting the transcription of differentiation factors such as LEF1, BMP2 and BMP4. Activity is repressed in a MSX1-mediated manner at the bell stage of mesenchymal tooth germ formation which prevents premature differentiation of odontoblasts. This chain is Catenin beta-1, found in Bos taurus (Bovine).